Here is a 183-residue protein sequence, read N- to C-terminus: MSLIDQAKEQMAKTVENTKENFSGIRTGRANPALLNGITVDYYGAPTPIKAVASIGVPEPRTLSVTPFDASQAGAVEKALRNSDLGISPNRDGNVIRLTMPELTEDRRKEYVKLAKGKAEDGKVAVRNIRRKTKETIDKAVKDGEMGEDEGDRLLKDLDKVTKSVTDEIDTLLETKQKEIMEV.

It belongs to the RRF family.

It is found in the cytoplasm. Responsible for the release of ribosomes from messenger RNA at the termination of protein biosynthesis. May increase the efficiency of translation by recycling ribosomes from one round of translation to another. The sequence is that of Ribosome-recycling factor from Bifidobacterium longum (strain DJO10A).